We begin with the raw amino-acid sequence, 402 residues long: MSTFKLMMDGRLVFAMAIAILSVVLSCGTCEKAKRAVRGRQDRPKEFPPPRYNYTILTRYNATALASPFINDQVKNVDLRIVTATRPCEMIALIAKTNIDSILKELAAAQKTYSARLTWFKIMPTCATPIHDVSYMKCNPKLSFAMCDERSDILWQASLITMAAETDDELGLVLAAPAHSASGLYRRVIEIDGRQIYTDFSVTIPSERCPIAFEQNFGNPDRCKTPEQYSRGEVFTRRFLGEFNFPQGEHMTWLKFWFVYDGGNLPVQFYEAQAFARPVPPDNHPGFDSVESEITQNKTDPKPGQADPKPNQPFKWPSIKHLAPRLDEVDEVIEPVTKPPKTSKSNSTFVGISVGLGIAGLVLVGVILYVCLRRKKELKKSAQNGLTRLRSTFKDVKYTQLP.

An N-terminal signal peptide occupies residues 1-30 (MSTFKLMMDGRLVFAMAIAILSVVLSCGTC). Residues 31–355 (EKAKRAVRGR…NSTFVGISVG (325 aa)) lie on the Virion surface side of the membrane. Asn-53 and Asn-61 each carry an N-linked (GlcNAc...) asparagine; by host glycan. Disulfide bonds link Cys-88–Cys-209, Cys-126–Cys-223, and Cys-138–Cys-147. Positions 281-315 (PDNHPGFDSVESEITQNKTDPKPGQADPKPNQPFK) are disordered. N-linked (GlcNAc...) asparagine; by host glycans are attached at residues Asn-297 and Asn-346. A helical membrane pass occupies residues 356–372 (LGIAGLVLVGVILYVCL). The Intravirion portion of the chain corresponds to 373 to 402 (RRKKELKKSAQNGLTRLRSTFKDVKYTQLP).

This sequence belongs to the herpesviridae glycoprotein D family.

It localises to the virion membrane. In terms of biological role, envelope glycoprotein that binds to host cell entry receptors, promoting the virus entry into host cells. May trigger fusion with host membrane, by recruiting the fusion machinery composed of gB and gH/gL. The sequence is that of Envelope glycoprotein D (gD) from Equus caballus (Horse).